Reading from the N-terminus, the 224-residue chain is MKITQWPAHERPREKLLTQGPDALSDAELLAIFLRTGIKGLSAVDLARNLLNTFGSLRGLISASQQDFCLAKGLGEAKFVQLQASIELSQRFFAEQLQRETVFNSAQQTKHFLIAQLRDEPNEVFGMLLLDSQHQLIKFRKMFFGTIDSASVYPRVLVKQALEDNAAAVILTHNHPSGVAEPSQADEHITARIISAMSLLDIKVLDHLVVGDGVAVSFAERGLI.

Positions 102–224 (VFNSAQQTKH…AVSFAERGLI (123 aa)) constitute an MPN domain. Residues histidine 173, histidine 175, and aspartate 186 each coordinate Zn(2+). Positions 173-186 (HNHPSGVAEPSQAD) match the JAMM motif motif.

The protein belongs to the UPF0758 family.

This chain is UPF0758 protein Patl_0046, found in Pseudoalteromonas atlantica (strain T6c / ATCC BAA-1087).